The following is an 838-amino-acid chain: Major vault protein (838 aa).

8 MVP repeats span residues 13–52, 53–114, 118–170, 171–223, 224–278, 280–328, 329–380, and 381–433; these read VHIL…VVPP, RFYC…FKLK, VNTG…HIIS, PNTA…ITLT, DTEA…IVLN, KEYC…NVVS, KDQA…IALD, and KNEG…CMSE.

The vault ribonucleoprotein particle is a huge (400 A x 670 A) cage structure of 12.9 MDa. It consists of a dimer of half-vaults, with each half-vault comprising 39 identical major vault protein (MVP) chains, PARP4 and one or more vault RNAs (vRNAs).

Its subcellular location is the cytoplasm. The protein localises to the nucleus. Functionally, required for normal vault structure. Vaults are multi-subunit structures that may act as scaffolds for proteins involved in signal transduction. Vaults may also play a role in nucleo-cytoplasmic transport. This is Major vault protein from Trypanosoma cruzi (strain CL Brener).